The sequence spans 581 residues: Putative protein phosphatase 2C 22 (581 aa).

The first 21 residues, 1 to 21 (MVISVPLFSSVLLALVVAVPA), serve as a signal peptide directing secretion. The 377-residue stretch at 102–478 (KYASSAMQGL…NNATAILVQF (377 aa)) folds into the PPM-type phosphatase domain. Residues Asp-138, Gly-139, Asp-373, and Asn-469 each coordinate Mn(2+). The segment at 538 to 563 (SDEVAGGAAVAEQHQHNPEGGGEQQL) is disordered.

It belongs to the PP2C family. The cofactor is Mg(2+). Requires Mn(2+) as cofactor.

The catalysed reaction is O-phospho-L-seryl-[protein] + H2O = L-seryl-[protein] + phosphate. It catalyses the reaction O-phospho-L-threonyl-[protein] + H2O = L-threonyl-[protein] + phosphate. The sequence is that of Putative protein phosphatase 2C 22 from Oryza sativa subsp. japonica (Rice).